Reading from the N-terminus, the 704-residue chain is Acetate--CoA ligase [ADP-forming] (704 aa).

The protein in the N-terminal section; belongs to the acetate CoA ligase alpha subunit family. This sequence in the C-terminal section; belongs to the acetate CoA ligase beta subunit family. As to quaternary structure, homodimer.

The enzyme catalyses acetate + ATP + CoA = acetyl-CoA + ADP + phosphate. Functionally, catalyzes the formation of acetate and ATP from acetyl-CoA by using ADP and phosphate. Can also use butyryl-CoA, but not phenylacetyl-CoA. Cannot catalyze the reverse reaction. This Methanocaldococcus jannaschii (strain ATCC 43067 / DSM 2661 / JAL-1 / JCM 10045 / NBRC 100440) (Methanococcus jannaschii) protein is Acetate--CoA ligase [ADP-forming].